An 85-amino-acid chain; its full sequence is Putative membrane protein insertion efficiency factor (85 aa).

It belongs to the UPF0161 family.

It is found in the cell inner membrane. Could be involved in insertion of integral membrane proteins into the membrane. This is Putative membrane protein insertion efficiency factor from Phenylobacterium zucineum (strain HLK1).